The following is a 339-amino-acid chain: Heat-inducible transcription repressor HrcA (339 aa).

It belongs to the HrcA family.

Negative regulator of class I heat shock genes (grpE-dnaK-dnaJ and groELS operons). Prevents heat-shock induction of these operons. This chain is Heat-inducible transcription repressor HrcA, found in Parafrankia sp. (strain EAN1pec).